The chain runs to 221 residues: 7-carboxy-7-deazaguanine synthase (221 aa).

Substrate contacts are provided by residues 12-14 and Arg-27; that span reads ING. The Radical SAM core domain maps to 18 to 216; the sequence is KSGQLSVFIR…IQIHKIIWNP (199 aa). The [4Fe-4S] cluster site is built by Cys-31, Cys-35, and Cys-38. Thr-40 lines the Mg(2+) pocket. Thr-73 contacts substrate. Gly-75 contacts S-adenosyl-L-methionine.

This sequence belongs to the radical SAM superfamily. 7-carboxy-7-deazaguanine synthase family. Homodimer. It depends on [4Fe-4S] cluster as a cofactor. S-adenosyl-L-methionine is required as a cofactor. The cofactor is Mg(2+).

It catalyses the reaction 6-carboxy-5,6,7,8-tetrahydropterin + H(+) = 7-carboxy-7-deazaguanine + NH4(+). The protein operates within purine metabolism; 7-cyano-7-deazaguanine biosynthesis. Its function is as follows. Catalyzes the complex heterocyclic radical-mediated conversion of 6-carboxy-5,6,7,8-tetrahydropterin (CPH4) to 7-carboxy-7-deazaguanine (CDG), a step common to the biosynthetic pathways of all 7-deazapurine-containing compounds. This chain is 7-carboxy-7-deazaguanine synthase, found in Clostridium acetobutylicum (strain ATCC 824 / DSM 792 / JCM 1419 / IAM 19013 / LMG 5710 / NBRC 13948 / NRRL B-527 / VKM B-1787 / 2291 / W).